A 307-amino-acid polypeptide reads, in one-letter code: Aspartate carbamoyltransferase catalytic subunit (307 aa).

Residues R54 and T55 each contribute to the carbamoyl phosphate site. K83 is a binding site for L-aspartate. Residues R104, H132, and Q135 each contribute to the carbamoyl phosphate site. The L-aspartate site is built by R165 and R228. Carbamoyl phosphate contacts are provided by L267 and P268.

The protein belongs to the aspartate/ornithine carbamoyltransferase superfamily. ATCase family. In terms of assembly, heterododecamer (2C3:3R2) of six catalytic PyrB chains organized as two trimers (C3), and six regulatory PyrI chains organized as three dimers (R2).

The enzyme catalyses carbamoyl phosphate + L-aspartate = N-carbamoyl-L-aspartate + phosphate + H(+). The protein operates within pyrimidine metabolism; UMP biosynthesis via de novo pathway; (S)-dihydroorotate from bicarbonate: step 2/3. Its function is as follows. Catalyzes the condensation of carbamoyl phosphate and aspartate to form carbamoyl aspartate and inorganic phosphate, the committed step in the de novo pyrimidine nucleotide biosynthesis pathway. In Clostridium perfringens (strain ATCC 13124 / DSM 756 / JCM 1290 / NCIMB 6125 / NCTC 8237 / Type A), this protein is Aspartate carbamoyltransferase catalytic subunit.